A 378-amino-acid chain; its full sequence is MKILVDENMPYARDLFSRLGEVTAVPGRPIPVAQLADADALMVRSVTKVNESLLGGKPIKFVGTATAGTDHVDEAWLKQAGIGFSAAPGCNAIAVVEYVFSSLLMLAERDGFSLHDRTVGIVGVGNVGRRLQARLEALGITTLLCDPPRADRGDEGDFRSLDELVQHADILTFHTPLFKDGPYKTLHLADEKLIRSLKPGAILINACRGAVVDNTALLTCLNEGQKLSVVLDVWEGEPELNVELLKKVDIGTPHIAGYTLEGKARGTTQVFEAYSKFIGHEQHVALDTLLPAPEFGRITLHGPLDQPTLKRLVHLVYDVRRDDAPLRKVAGIPGEFDKLRKNYLERREWSSLYVICDDASAASLLCKLGFNAVHHPAR.

Substrate contacts are provided by serine 45 and threonine 66. NAD(+) is bound by residues aspartate 146 and threonine 175. Residue arginine 208 is part of the active site. Aspartate 232 contributes to the NAD(+) binding site. Glutamate 237 is a catalytic residue. Residue histidine 254 is the Proton donor of the active site. Residue glycine 257 participates in NAD(+) binding. Tyrosine 258 serves as a coordination point for substrate.

The protein belongs to the D-isomer specific 2-hydroxyacid dehydrogenase family. PdxB subfamily. Homodimer.

It is found in the cytoplasm. It carries out the reaction 4-phospho-D-erythronate + NAD(+) = (R)-3-hydroxy-2-oxo-4-phosphooxybutanoate + NADH + H(+). The protein operates within cofactor biosynthesis; pyridoxine 5'-phosphate biosynthesis; pyridoxine 5'-phosphate from D-erythrose 4-phosphate: step 2/5. Functionally, catalyzes the oxidation of erythronate-4-phosphate to 3-hydroxy-2-oxo-4-phosphonooxybutanoate. In Escherichia coli O17:K52:H18 (strain UMN026 / ExPEC), this protein is Erythronate-4-phosphate dehydrogenase.